Here is a 261-residue protein sequence, read N- to C-terminus: 3-hydroxyacyl-CoA dehydrogenase type-2 (261 aa).

Alanine 2 bears the N-acetylalanine mark. NAD(+) is bound by residues serine 20, leucine 22, and aspartate 41. An N6-acetyllysine; alternate modification is found at lysine 53. The residue at position 53 (lysine 53) is an N6-succinyllysine; alternate. Residue valine 65 coordinates NAD(+). Lysine 69 is subject to N6-acetyllysine. Cysteine 91 lines the NAD(+) pocket. 2 positions are modified to N6-acetyllysine: lysine 99 and lysine 105. A substrate-binding site is contributed by serine 155. Positions 168, 172, 201, and 203 each coordinate NAD(+). Tyrosine 168 serves as the catalytic Proton acceptor. N6-acetyllysine; alternate is present on lysine 212. An N6-succinyllysine; alternate modification is found at lysine 212.

It belongs to the short-chain dehydrogenases/reductases (SDR) family. Homotetramer. Component of mitochondrial ribonuclease P, a complex composed of TRMT10C/MRPP1, HSD17B10/MRPP2 and PRORP/MRPP3. Interacts with TRMT10C/MRPP1; forming the MRPP1-MRPP2 subcomplex of the mitochondrial ribonuclease P complex.

The protein localises to the mitochondrion. It is found in the mitochondrion matrix. The protein resides in the mitochondrion nucleoid. It catalyses the reaction a (3S)-3-hydroxyacyl-CoA + NAD(+) = a 3-oxoacyl-CoA + NADH + H(+). The catalysed reaction is (2S,3S)-3-hydroxy-2-methylbutanoyl-CoA + NAD(+) = 2-methyl-3-oxobutanoyl-CoA + NADH + H(+). The enzyme catalyses testosterone + NAD(+) = androst-4-ene-3,17-dione + NADH + H(+). It carries out the reaction 5alpha-androstane-3alpha,17beta-diol + NAD(+) = 17beta-hydroxy-5alpha-androstan-3-one + NADH + H(+). It catalyses the reaction 17beta-estradiol + NAD(+) = estrone + NADH + H(+). The catalysed reaction is cholate + NAD(+) = 3alpha,12alpha-dihydroxy-7-oxo-5beta-cholanate + NADH + H(+). The enzyme catalyses (3S)-3-hydroxybutanoyl-CoA + NAD(+) = acetoacetyl-CoA + NADH + H(+). It carries out the reaction (3S)-hydroxyoctanoyl-CoA + NAD(+) = 3-oxooctanoyl-CoA + NADH + H(+). It catalyses the reaction (3S)-hydroxyhexadecanoyl-CoA + NAD(+) = 3-oxohexadecanoyl-CoA + NADH + H(+). The catalysed reaction is 17beta-hydroxy-5alpha-androstan-3-one + NAD(+) = 5alpha-androstan-3,17-dione + NADH + H(+). The enzyme catalyses 5alpha-pregnan-20beta-ol-3-one + NAD(+) = 5alpha-pregnane-3,20-dione + NADH + H(+). It carries out the reaction 3alpha-hydroxy-5alpha-pregnan-20-one + NAD(+) = 5alpha-pregnane-3,20-dione + NADH + H(+). It catalyses the reaction cortisone + NAD(+) = 17alpha-hydroxypregn-4-en-3,11,20-trione-21-al + NADH + H(+). The catalysed reaction is 11-dehydrocorticosterone + NAD(+) = pregn-4-ene-3,11,20,21-tetraone + NADH + H(+). The enzyme catalyses cortisol + NAD(+) = 11beta,17alpha-dihydroxypregn-4-ene-3,20,21-trione + NADH + H(+). It carries out the reaction chenodeoxycholate + NAD(+) = 7-oxolithocholate + NADH + H(+). It catalyses the reaction ursodeoxycholate + NAD(+) = 7-oxolithocholate + NADH + H(+). The catalysed reaction is 3beta,7beta-dihydroxy-5beta-cholan-24-oate + NAD(+) = 3beta-hydroxy-7-oxo-5beta-cholan-24-oate + NADH + H(+). It participates in amino-acid degradation; L-isoleucine degradation. It functions in the pathway lipid metabolism; fatty acid beta-oxidation. The protein operates within steroid metabolism. Its pathway is lipid metabolism; bile acid biosynthesis. Its function is as follows. Mitochondrial dehydrogenase involved in pathways of fatty acid, branched-chain amino acid and steroid metabolism. Acts as (S)-3-hydroxyacyl-CoA dehydrogenase in mitochondrial fatty acid beta-oxidation, a major degradation pathway of fatty acids. Catalyzes the third step in the beta-oxidation cycle, namely the reversible conversion of (S)-3-hydroxyacyl-CoA to 3-ketoacyl-CoA. Preferentially accepts straight medium- and short-chain acyl-CoA substrates with highest efficiency for (3S)-hydroxybutanoyl-CoA. Acts as 3-hydroxy-2-methylbutyryl-CoA dehydrogenase in branched-chain amino acid catabolic pathway. Catalyzes the oxidation of 3-hydroxy-2-methylbutanoyl-CoA into 2-methyl-3-oxobutanoyl-CoA, a step in isoleucine degradation pathway. Has hydroxysteroid dehydrogenase activity toward steroid hormones and bile acids. Catalyzes the oxidation of 3alpha-, 17beta-, 20beta- and 21-hydroxysteroids and 7alpha- and 7beta-hydroxy bile acids. Oxidizes allopregnanolone/brexanolone at the 3alpha-hydroxyl group, which is known to be critical for the activation of gamma-aminobutyric acid receptors (GABAARs) chloride channel. Has phospholipase C-like activity toward cardiolipin and its oxidized species. Likely oxidizes the 2'-hydroxyl in the head group of cardiolipin to form a ketone intermediate that undergoes nucleophilic attack by water and fragments into diacylglycerol, dihydroxyacetone and orthophosphate. Has higher affinity for cardiolipin with oxidized fatty acids and may degrade these species during the oxidative stress response to protect cells from apoptosis. By interacting with intracellular amyloid-beta, it may contribute to the neuronal dysfunction associated with Alzheimer disease (AD). Essential for structural and functional integrity of mitochondria. In terms of biological role, in addition to mitochondrial dehydrogenase activity, moonlights as a component of mitochondrial ribonuclease P, a complex that cleaves tRNA molecules in their 5'-ends. Together with TRMT10C/MRPP1, forms a subcomplex of the mitochondrial ribonuclease P, named MRPP1-MRPP2 subcomplex, which displays functions that are independent of the ribonuclease P activity. The MRPP1-MRPP2 subcomplex catalyzes the formation of N(1)-methylguanine and N(1)-methyladenine at position 9 (m1G9 and m1A9, respectively) in tRNAs; HSD17B10/MRPP2 acting as a non-catalytic subunit. The MRPP1-MRPP2 subcomplex also acts as a tRNA maturation platform: following 5'-end cleavage by the mitochondrial ribonuclease P complex, the MRPP1-MRPP2 subcomplex enhances the efficiency of 3'-processing catalyzed by ELAC2, retains the tRNA product after ELAC2 processing and presents the nascent tRNA to the mitochondrial CCA tRNA nucleotidyltransferase TRNT1 enzyme. Associates with mitochondrial DNA complexes at the nucleoids to initiate RNA processing and ribosome assembly. In Rattus norvegicus (Rat), this protein is 3-hydroxyacyl-CoA dehydrogenase type-2 (Hsd17b10).